We begin with the raw amino-acid sequence, 70 residues long: Small ribosomal subunit protein bS21 (70 aa).

Belongs to the bacterial ribosomal protein bS21 family.

The polypeptide is Small ribosomal subunit protein bS21 (Helicobacter pylori (strain P12)).